Here is a 436-residue protein sequence, read N- to C-terminus: Serine protease inhibitor A6 (436 aa).

The signal sequence occupies residues 1-16 (MHLLVYLSLFFALALA). Residues 26–60 (KHRHRHEQQGHHDSAKHGHQKDKQQQEQIKNDEGK) are disordered. The segment covering 32–60 (EQQGHHDSAKHGHQKDKQQQEQIKNDEGK) has biased composition (basic and acidic residues). N260 and N289 each carry an N-linked (GlcNAc...) asparagine glycan.

The protein belongs to the serpin family. Liver.

It localises to the secreted. Its subcellular location is the extracellular space. Not yet known. The chain is Serine protease inhibitor A6 (serpina6) from Xenopus laevis (African clawed frog).